A 712-amino-acid chain; its full sequence is Polyribonucleotide nucleotidyltransferase (712 aa).

The Mg(2+) site is built by aspartate 485 and aspartate 491. The KH domain maps to 552–611; that stretch reads PRIHTMKIDPKKIKDVIGKGGAVIRSLTEETGTSIDIDDDGTVKIAATDNNAAKMVMSRI. Positions 621–689 constitute an S1 motif domain; sequence NAIYTGKVSR…RQNRIRLTMK (69 aa).

This sequence belongs to the polyribonucleotide nucleotidyltransferase family. As to quaternary structure, component of the RNA degradosome, which is a multiprotein complex involved in RNA processing and mRNA degradation. The cofactor is Mg(2+).

The protein resides in the cytoplasm. The catalysed reaction is RNA(n+1) + phosphate = RNA(n) + a ribonucleoside 5'-diphosphate. In terms of biological role, involved in mRNA degradation. Catalyzes the phosphorolysis of single-stranded polyribonucleotides processively in the 3'- to 5'-direction. The protein is Polyribonucleotide nucleotidyltransferase of Haemophilus ducreyi (strain 35000HP / ATCC 700724).